Here is an 86-residue protein sequence, read N- to C-terminus: U18-theraphotoxin-Cg1a (86 aa).

The N-terminal stretch at 1-20 (KASVLITLAVLGVMFVWTSA) is a signal peptide. The propeptide occupies 21 to 49 (AELEERGSDQRDSPALIKSMAKVFQSEER). Intrachain disulfides connect Cys51–Cys65, Cys58–Cys70, and Cys64–Cys78. Position 84 is a phenylalanine amide (Phe84).

The protein belongs to the neurotoxin 10 (Hwtx-1) family. 47 subfamily. In terms of tissue distribution, expressed by the venom gland.

It localises to the secreted. Functionally, inhibits TTX-sensitive and TTX-insensitive sodium currents (IC(50) is 0.6 uM and 0.95 uM respectively) on rat dorsal root ganglion (DRG) neurons. Inhibits muscular subtypes sodium channels Nav1.4/SCN4A and Nav1.5/SCN5A transiently transfected in to HEK293 cells (IC(50) is 5.42 uM and 0.45 uM respectively). Also blocks Kv2.1/KCNB1 potassium channels expressed in X.laevis oocytes with an IC(50) of 604 nM. Injection of the toxin in mice was immediately followed by general ataxia, lack of response to stimuli and semiparalysis. The protein is U18-theraphotoxin-Cg1a of Chilobrachys guangxiensis (Chinese earth tiger tarantula).